We begin with the raw amino-acid sequence, 51 residues long: Insulin (51 aa).

Intrachain disulfides connect Cys-7–Cys-37, Cys-19–Cys-50, and Cys-36–Cys-41.

Belongs to the insulin family. As to quaternary structure, heterodimer of a B chain and an A chain linked by two disulfide bonds.

The protein resides in the secreted. Insulin decreases blood glucose concentration. It increases cell permeability to monosaccharides, amino acids and fatty acids. It accelerates glycolysis, the pentose phosphate cycle, and glycogen synthesis in liver. The protein is Insulin (INS) of Saimiri sciureus (Common squirrel monkey).